Here is a 249-residue protein sequence, read N- to C-terminus: Ubiquinone/menaquinone biosynthesis C-methyltransferase UbiE (249 aa).

Residues Thr-72, Asp-93, and 121-122 (DA) contribute to the S-adenosyl-L-methionine site.

This sequence belongs to the class I-like SAM-binding methyltransferase superfamily. MenG/UbiE family.

It catalyses the reaction a 2-demethylmenaquinol + S-adenosyl-L-methionine = a menaquinol + S-adenosyl-L-homocysteine + H(+). It carries out the reaction a 2-methoxy-6-(all-trans-polyprenyl)benzene-1,4-diol + S-adenosyl-L-methionine = a 5-methoxy-2-methyl-3-(all-trans-polyprenyl)benzene-1,4-diol + S-adenosyl-L-homocysteine + H(+). Its pathway is quinol/quinone metabolism; menaquinone biosynthesis; menaquinol from 1,4-dihydroxy-2-naphthoate: step 2/2. It participates in cofactor biosynthesis; ubiquinone biosynthesis. Functionally, methyltransferase required for the conversion of demethylmenaquinol (DMKH2) to menaquinol (MKH2) and the conversion of 2-polyprenyl-6-methoxy-1,4-benzoquinol (DDMQH2) to 2-polyprenyl-3-methyl-6-methoxy-1,4-benzoquinol (DMQH2). This Cellvibrio japonicus (strain Ueda107) (Pseudomonas fluorescens subsp. cellulosa) protein is Ubiquinone/menaquinone biosynthesis C-methyltransferase UbiE.